A 278-amino-acid polypeptide reads, in one-letter code: Shikimate dehydrogenase (NADP(+)) (278 aa).

Shikimate contacts are provided by residues 23–25 (SRS) and Thr-70. The active-site Proton acceptor is Lys-74. Residue Glu-86 coordinates NADP(+). Shikimate-binding residues include Asn-95 and Asp-110. NADP(+)-binding positions include 135 to 139 (GAGGA), 159 to 164 (NRTKEK), and Met-224. Residue Tyr-226 participates in shikimate binding. Gly-248 contributes to the NADP(+) binding site.

Belongs to the shikimate dehydrogenase family. As to quaternary structure, homodimer.

It catalyses the reaction shikimate + NADP(+) = 3-dehydroshikimate + NADPH + H(+). It functions in the pathway metabolic intermediate biosynthesis; chorismate biosynthesis; chorismate from D-erythrose 4-phosphate and phosphoenolpyruvate: step 4/7. Functionally, involved in the biosynthesis of the chorismate, which leads to the biosynthesis of aromatic amino acids. Catalyzes the reversible NADPH linked reduction of 3-dehydroshikimate (DHSA) to yield shikimate (SA). The chain is Shikimate dehydrogenase (NADP(+)) from Alcanivorax borkumensis (strain ATCC 700651 / DSM 11573 / NCIMB 13689 / SK2).